The following is a 163-amino-acid chain: Cytochrome c-type biogenesis protein CcmE (163 aa).

Residues 1-8 (MNPRRKKR) lie on the Cytoplasmic side of the membrane. Residues 9-29 (LTIILAISAGLAAVIGLVLYA) form a helical; Signal-anchor for type II membrane protein membrane-spanning segment. The Periplasmic segment spans residues 30 to 163 (LSQNIDLFYT…TEAQLKGAKQ (134 aa)). Residues H131 and Y135 each coordinate heme.

It belongs to the CcmE/CycJ family.

It is found in the cell inner membrane. Functionally, heme chaperone required for the biogenesis of c-type cytochromes. Transiently binds heme delivered by CcmC and transfers the heme to apo-cytochromes in a process facilitated by CcmF and CcmH. In Aeromonas salmonicida (strain A449), this protein is Cytochrome c-type biogenesis protein CcmE.